A 161-amino-acid polypeptide reads, in one-letter code: 6,7-dimethyl-8-ribityllumazine synthase (161 aa).

Residues Trp26, 58–60 (SFE), and 81–83 (VVI) each bind 5-amino-6-(D-ribitylamino)uracil. 86–87 (GT) serves as a coordination point for (2S)-2-hydroxy-3-oxobutyl phosphate. Catalysis depends on His89, which acts as the Proton donor. 5-amino-6-(D-ribitylamino)uracil is bound at residue Phe114. Residue Arg128 participates in (2S)-2-hydroxy-3-oxobutyl phosphate binding.

Belongs to the DMRL synthase family.

It carries out the reaction (2S)-2-hydroxy-3-oxobutyl phosphate + 5-amino-6-(D-ribitylamino)uracil = 6,7-dimethyl-8-(1-D-ribityl)lumazine + phosphate + 2 H2O + H(+). It functions in the pathway cofactor biosynthesis; riboflavin biosynthesis; riboflavin from 2-hydroxy-3-oxobutyl phosphate and 5-amino-6-(D-ribitylamino)uracil: step 1/2. Its function is as follows. Catalyzes the formation of 6,7-dimethyl-8-ribityllumazine by condensation of 5-amino-6-(D-ribitylamino)uracil with 3,4-dihydroxy-2-butanone 4-phosphate. This is the penultimate step in the biosynthesis of riboflavin. In Streptomyces avermitilis (strain ATCC 31267 / DSM 46492 / JCM 5070 / NBRC 14893 / NCIMB 12804 / NRRL 8165 / MA-4680), this protein is 6,7-dimethyl-8-ribityllumazine synthase.